Reading from the N-terminus, the 1239-residue chain is Erythroid differentiation-related factor 1 (1239 aa).

4 disordered regions span residues 1–39 (MGDPKEAGAEASPSGAAARGGLSLLSQADSEEPSAQGSA), 219–269 (AQPV…REPL), 517–559 (PKKE…DPAD), and 620–646 (KKESDLPAADPSTPIPLKYEDESTRGG). Composition is skewed to low complexity over residues 9–28 (AEASPSGAAARGGLSLLSQA) and 253–263 (SSVSEDPSASS). Residues 530-547 (NSDESYSEEEEEMADSDE) are compositionally biased toward acidic residues. 2 TPR repeats span residues 693–726 (SKAYYILSDAAMSLQKYGRALRYIKLALQSHDTY) and 914–953 (AQAHCGAEDEFKREFSPEEGLYYSKAVDYYLKALRSLGTR).

The protein resides in the nucleus. Its function is as follows. Transcription factor involved in erythroid differentiation. Involved in transcriptional activation of the globin gene. The chain is Erythroid differentiation-related factor 1 (Edrf1) from Mus musculus (Mouse).